The primary structure comprises 143 residues: Large ribosomal subunit protein uL11 (143 aa).

Belongs to the universal ribosomal protein uL11 family. As to quaternary structure, part of the ribosomal stalk of the 50S ribosomal subunit. Interacts with L10 and the large rRNA to form the base of the stalk. L10 forms an elongated spine to which L12 dimers bind in a sequential fashion forming a multimeric L10(L12)X complex. One or more lysine residues are methylated.

Forms part of the ribosomal stalk which helps the ribosome interact with GTP-bound translation factors. The polypeptide is Large ribosomal subunit protein uL11 (Sphingopyxis alaskensis (strain DSM 13593 / LMG 18877 / RB2256) (Sphingomonas alaskensis)).